A 20-amino-acid chain; its full sequence is Fibrinogen beta chain (20 aa).

Tyr-5 carries the sulfotyrosine modification.

As to quaternary structure, heterohexamer; disulfide linked. Contains 2 sets of 3 non-identical chains (alpha, beta and gamma). The 2 heterotrimers are in head to head conformation with the N-termini in a small central domain. In terms of processing, conversion of fibrinogen to fibrin is triggered by thrombin, which cleaves fibrinopeptides A and B from alpha and beta chains, and thus exposes the N-terminal polymerization sites responsible for the formation of the soft clot.

Its subcellular location is the secreted. Its function is as follows. Cleaved by the protease thrombin to yield monomers which, together with fibrinogen alpha (FGA) and fibrinogen gamma (FGG), polymerize to form an insoluble fibrin matrix. Fibrin has a major function in hemostasis as one of the primary components of blood clots. In addition, functions during the early stages of wound repair to stabilize the lesion and guide cell migration during re-epithelialization. Was originally thought to be essential for platelet aggregation, based on in vitro studies using anticoagulated blood. However subsequent studies have shown that it is not absolutely required for thrombus formation in vivo. Enhances expression of SELP in activated platelets. Maternal fibrinogen is essential for successful pregnancy. Fibrin deposition is also associated with infection, where it protects against IFNG-mediated hemorrhage. May also facilitate the antibacterial immune response via both innate and T-cell mediated pathways. In Capra hircus (Goat), this protein is Fibrinogen beta chain (FGB).